The following is an 874-amino-acid chain: Pentatricopeptide repeat-containing protein At2g17140 (874 aa).

19 PPR repeats span residues 111–145, 146–180, 181–215, 216–250, 251–285, 290–320, 325–359, 360–394, 395–429, 430–464, 465–499, 523–557, 558–592, 593–627, 628–662, 663–693, 697–731, 732–766, and 767–797; these read SVYLYNLLLESCIKERRVEFVSWLYKDMVLCGIAP, QTYTFNLLIRALCDSSCVDAARELFDEMPEKGCKP, NEFTFGILVRGYCKAGLTDKGLELLNAMESFGVLP, NKVIYNTIVSSFCREGRNDDSEKMVEKMREEGLVP, DIVTFNSRISALCKEGKVLDASRIFSDMELDEYLG, NSITYNLMLKGFCKVGLLEDAKTLFESIREN, SLQSYNIWLQGLVRHGKFIEAETVLKQMTDKGIGP, SIYSYNILMDGLCKLGMLSDAKTIVGLMKRNGVCP, DAVTYGCLLHGYCSVGKVDAAKSLLQEMMRNNCLP, NAYTCNILLHSLWKMGRISEAEELLRKMNEKGYGL, DTVTCNIIVDGLCGSGELDKAIEIVKGMRVHGSAA, DLITYSTLLNGLCKAGRFAEAKNLFAEMMGEKLQP, DSVAYNIFIHHFCKQGKISSAFRVLKDMEKKGCHK, SLETYNSLILGLGIKNQIFEIHGLMDEMKEKGISP, NICTYNTAIQYLCEGEKVEDATNLLDEMMQKNIAP, NVFSFKYLIEAFCKVPDFDMAQEVFETAVSI, KEGLYSLMFNELLAAGQLLKATELLEAVLDRGFEL, GTFLYKDLVESLCKKDELEVASGILHKMIDRGYGF, and DPAALMPVIDGLGKMGNKKEANSFADKMMEM.

This sequence belongs to the PPR family. P subfamily.

This chain is Pentatricopeptide repeat-containing protein At2g17140, found in Arabidopsis thaliana (Mouse-ear cress).